The following is a 740-amino-acid chain: Alpha-1,6-mannosylglycoprotein 6-beta-N-acetylglucosaminyltransferase A (740 aa).

At 1-13 the chain is on the cytoplasmic side; it reads MAFFSPWKLSSQK. The helical; Signal-anchor for type II membrane protein transmembrane segment at 14–30 threads the bilayer; it reads LGFFLVTFGFIWGMMLL. Topologically, residues 31-740 are lumenal; that stretch reads HFTIQQRTQP…GQVALCKDCL (710 aa). N109, N114, and N117 each carry an N-linked (GlcNAc...) asparagine glycan. 9 disulfide bridges follow: C144/C182, C155/C195, C171/C337, C371/C625, C648/C723, C652/C725, C659/C712, C680/C701, and C736/C739. The sufficient for catalytic activity stretch occupies residues 212 to 740; sequence NSLAEIRTDF…GQVALCKDCL (529 aa). N333 carries an N-linked (GlcNAc...) asparagine glycan. Substrate is bound at residue 377–378; the sequence is DS. N432 and N446 each carry an N-linked (GlcNAc...) asparagine glycan. E525 contributes to the UDP-N-acetyl-alpha-D-glucosamine binding site. Residue K553 participates in substrate binding.

This sequence belongs to the glycosyltransferase 18 family. Post-translationally, N-glycosylated. In terms of processing, a secreted form is released from the membrane after cleavage by gamma-secretase. As to expression, detected in cerebellum.

It is found in the golgi apparatus membrane. It localises to the perikaryon. Its subcellular location is the secreted. It carries out the reaction N(4)-{beta-D-GlcNAc-(1-&gt;2)-[beta-D-GlcNAc-(1-&gt;4)]-alpha-D-Man-(1-&gt;3)-[beta-D-GlcNAc-(1-&gt;2)-alpha-D-Man-(1-&gt;6)]-beta-D-Man-(1-&gt;4)-beta-D-GlcNAc-(1-&gt;4)-beta-D-GlcNAc}-L-asparaginyl-[protein] + UDP-N-acetyl-alpha-D-glucosamine = N(4)-{beta-D-GlcNAc-(1-&gt;2)-[beta-D-GlcNAc-(1-&gt;4)]-alpha-D-Man-(1-&gt;3)-[beta-D-GlcNAc-(1-&gt;2)-[beta-D-GlcNAc-(1-&gt;6)]-alpha-D-Man-(1-&gt;6)]-beta-D-Man-(1-&gt;4)-beta-D-GlcNAc-(1-&gt;4)-beta-D-GlcNAc}-L-asparaginyl-[protein] + UDP + H(+). It participates in protein modification; protein glycosylation. Its function is as follows. Catalyzes the addition of N-acetylglucosamine (GlcNAc) in beta 1-6 linkage to the alpha-linked mannose of biantennary N-linked oligosaccharides. Catalyzes an important step in the biosynthesis of branched, complex-type N-glycans, such as those found on EGFR, TGFR (TGF-beta receptor) and CDH2. Via its role in the biosynthesis of complex N-glycans, plays an important role in the activation of cellular signaling pathways, reorganization of the actin cytoskeleton, cell-cell adhesion and cell migration. MGAT5-dependent EGFR N-glycosylation enhances the interaction between EGFR and LGALS3 and thereby prevents rapid EGFR endocytosis and prolongs EGFR signaling. Required for efficient interaction between TGFB1 and its receptor. Enhances activation of intracellular signaling pathways by several types of growth factors, including FGF2, PDGF, IGF, TGFB1 and EGF. MGAT5-dependent CDH2 N-glycosylation inhibits CDH2-mediated homotypic cell-cell adhesion and contributes to the regulation of downstream signaling pathways. Promotes cell migration. Contributes to the regulation of the inflammatory response. MGAT5-dependent TCR N-glycosylation enhances the interaction between TCR and LGALS3, limits agonist-induced TCR clustering, and thereby dampens TCR-mediated responses to antigens. Required for normal leukocyte evasation and accumulation at sites of inflammation. Inhibits attachment of monocytes to the vascular endothelium and subsequent monocyte diapedesis. Promotes proliferation of umbilical vein endothelial cells and angiogenesis, at least in part by promoting the release of the growth factor FGF2 from the extracellular matrix. In Mus musculus (Mouse), this protein is Alpha-1,6-mannosylglycoprotein 6-beta-N-acetylglucosaminyltransferase A (Mgat5).